The following is a 328-amino-acid chain: Malate dehydrogenase (328 aa).

11–17 (GAAGQIG) contacts NAD(+). R92 and R98 together coordinate substrate. Residues N105, Q112, and 129 to 131 (VGN) each bind NAD(+). Substrate contacts are provided by N131 and R162. H187 (proton acceptor) is an active-site residue.

Belongs to the LDH/MDH superfamily. MDH type 2 family.

It catalyses the reaction (S)-malate + NAD(+) = oxaloacetate + NADH + H(+). Functionally, catalyzes the reversible oxidation of malate to oxaloacetate. The polypeptide is Malate dehydrogenase (Coxiella burnetii (strain CbuK_Q154) (Coxiella burnetii (strain Q154))).